The following is a 65-amino-acid chain: Hainantoxin-X-3 (65 aa).

Positions 1-20 (MNMKILVLVAVLCLVVSTHA) are cleaved as a signal peptide. Residues 21 to 37 (ERHSKTDMEDSPMIQER) constitute a propeptide that is removed on maturation. Disulfide bonds link cysteine 46–cysteine 59 and cysteine 55–cysteine 64.

It belongs to the neurotoxin 36 family. 02 subfamily. As to expression, expressed by the venom gland.

The protein localises to the secreted. Reversibly blocks N-type calcium channels (Cav2.2/CACNA1B) in rat dorsal root ganglion cells. Elicits no toxic symptoms in either vertebrates or invertebrates during a period of 48 hours post-injection, when it was assayed in vivo by direct injection into mice and cockroaches. This chain is Hainantoxin-X-3, found in Cyriopagopus hainanus (Chinese bird spider).